Consider the following 430-residue polypeptide: 3-phosphoshikimate 1-carboxyvinyltransferase (430 aa).

Residues Lys-25, Ser-26, and Arg-30 each contribute to the 3-phosphoshikimate site. Lys-25 lines the phosphoenolpyruvate pocket. Positions 97 and 125 each coordinate phosphoenolpyruvate. Positions 170, 172, 318, and 345 each coordinate 3-phosphoshikimate. Residue Gln-172 participates in phosphoenolpyruvate binding. The Proton acceptor role is filled by Asp-318. Phosphoenolpyruvate is bound by residues Arg-349 and Arg-391.

The protein belongs to the EPSP synthase family. Monomer.

The protein localises to the cytoplasm. The enzyme catalyses 3-phosphoshikimate + phosphoenolpyruvate = 5-O-(1-carboxyvinyl)-3-phosphoshikimate + phosphate. Its pathway is metabolic intermediate biosynthesis; chorismate biosynthesis; chorismate from D-erythrose 4-phosphate and phosphoenolpyruvate: step 6/7. Catalyzes the transfer of the enolpyruvyl moiety of phosphoenolpyruvate (PEP) to the 5-hydroxyl of shikimate-3-phosphate (S3P) to produce enolpyruvyl shikimate-3-phosphate and inorganic phosphate. This Shouchella clausii (strain KSM-K16) (Alkalihalobacillus clausii) protein is 3-phosphoshikimate 1-carboxyvinyltransferase.